The following is a 354-amino-acid chain: 3'-5' exonuclease (354 aa).

Residues 1 to 120 are disordered; it reads MEKYLIKMPI…PSPEKEKPEK (120 aa). Basic and acidic residues-rich tracts occupy residues 13–23, 36–50, and 71–91; these read KASEVPKDKAV, TKND…KENA, and KNLD…ENPP. Residues serine 104, serine 110, and serine 112 each carry the phosphoserine modification. The region spanning 146–314 is the 3'-5' exonuclease domain; that stretch reads VLQWVEKQKD…GQVIYRELER (169 aa). Residues aspartate 163, glutamate 165, and aspartate 301 each contribute to the Mg(2+) site.

Belongs to the WRNexo family.

Its subcellular location is the nucleus. Functionally, has exonuclease activity on both single-stranded and duplex templates bearing overhangs, but not blunt ended duplex DNA, and cleaves in a 3'-5' direction. Essential for the formation of DNA replication focal centers. Has an important role in maintaining genome stability. In Drosophila erecta (Fruit fly), this protein is 3'-5' exonuclease.